The primary structure comprises 449 residues: Tubulin alpha-8 chain (449 aa).

Positions 1-4 (MREC) match the MREC motif motif. GTP-binding residues include glutamine 11, glutamate 71, serine 140, glycine 144, threonine 145, threonine 179, asparagine 206, and asparagine 228. Residue glutamate 71 participates in Mg(2+) binding. Glutamate 254 is a catalytic residue.

This sequence belongs to the tubulin family. As to quaternary structure, dimer of alpha and beta chains. A typical microtubule is a hollow water-filled tube with an outer diameter of 25 nm and an inner diameter of 15 nM. Alpha-beta heterodimers associate head-to-tail to form protofilaments running lengthwise along the microtubule wall with the beta-tubulin subunit facing the microtubule plus end conferring a structural polarity. Microtubules usually have 13 protofilaments but different protofilament numbers can be found in some organisms and specialized cells. The cofactor is Mg(2+). In terms of processing, some glutamate residues at the C-terminus are polyglycylated, resulting in polyglycine chains on the gamma-carboxyl group. Glycylation is mainly limited to tubulin incorporated into axonemes (cilia and flagella) whereas glutamylation is prevalent in neuronal cells, centrioles, axonemes, and the mitotic spindle. Both modifications can coexist on the same protein on adjacent residues, and lowering polyglycylation levels increases polyglutamylation, and reciprocally. Cilia and flagella glycylation is required for their stability and maintenance. Flagella glycylation controls sperm motility. Some glutamate residues at the C-terminus are polyglutamylated, resulting in polyglutamate chains on the gamma-carboxyl group. Polyglutamylation plays a key role in microtubule severing by spastin (SPAST). SPAST preferentially recognizes and acts on microtubules decorated with short polyglutamate tails: severing activity by SPAST increases as the number of glutamates per tubulin rises from one to eight, but decreases beyond this glutamylation threshold. Glutamylation is also involved in cilia motility. Post-translationally, the C-terminal phenylalanine residue is cleaved by MATCAP1/KIAA0895L.

Its subcellular location is the cytoplasm. The protein localises to the cytoskeleton. The catalysed reaction is GTP + H2O = GDP + phosphate + H(+). Tubulin is the major constituent of microtubules, a cylinder consisting of laterally associated linear protofilaments composed of alpha- and beta-tubulin heterodimers. Microtubules grow by the addition of GTP-tubulin dimers to the microtubule end, where a stabilizing cap forms. Below the cap, tubulin dimers are in GDP-bound state, owing to GTPase activity of alpha-tubulin. The polypeptide is Tubulin alpha-8 chain (Tuba8) (Rattus norvegicus (Rat)).